The chain runs to 351 residues: Alanine racemase (351 aa).

Catalysis depends on lysine 34, which acts as the Proton acceptor; specific for D-alanine. Lysine 34 is subject to N6-(pyridoxal phosphate)lysine. Arginine 126 provides a ligand contact to substrate. Tyrosine 248 functions as the Proton acceptor; specific for L-alanine in the catalytic mechanism. Methionine 296 contributes to the substrate binding site.

It belongs to the alanine racemase family. Pyridoxal 5'-phosphate serves as cofactor.

The enzyme catalyses L-alanine = D-alanine. Its pathway is amino-acid biosynthesis; D-alanine biosynthesis; D-alanine from L-alanine: step 1/1. Catalyzes the interconversion of L-alanine and D-alanine. May also act on other amino acids. The protein is Alanine racemase (alr) of Deinococcus radiodurans (strain ATCC 13939 / DSM 20539 / JCM 16871 / CCUG 27074 / LMG 4051 / NBRC 15346 / NCIMB 9279 / VKM B-1422 / R1).